The chain runs to 62 residues: Photosystem II reaction center protein Z (62 aa).

A run of 2 helical transmembrane segments spans residues 8–28 and 41–61; these read TLFAFVGLSFLLVVGVPVVFA and FSGIGFWFLLVFAVGILNSFV.

The protein belongs to the PsbZ family. PSII is composed of 1 copy each of membrane proteins PsbA, PsbB, PsbC, PsbD, PsbE, PsbF, PsbH, PsbI, PsbJ, PsbK, PsbL, PsbM, PsbT, PsbY, PsbZ, Psb30/Ycf12, at least 3 peripheral proteins of the oxygen-evolving complex and a large number of cofactors. It forms dimeric complexes.

Its subcellular location is the plastid. It localises to the chloroplast thylakoid membrane. In terms of biological role, may control the interaction of photosystem II (PSII) cores with the light-harvesting antenna, regulates electron flow through the 2 photosystem reaction centers. PSII is a light-driven water plastoquinone oxidoreductase, using light energy to abstract electrons from H(2)O, generating a proton gradient subsequently used for ATP formation. This chain is Photosystem II reaction center protein Z, found in Tupiella akineta (Green alga).